A 355-amino-acid polypeptide reads, in one-letter code: Holliday junction branch migration complex subunit RuvB (355 aa).

The tract at residues 1-26 (MSIQTDDFASSSPAARRVVSTAPASP) is disordered. Residues 5–196 (TDDFASSSPA…FGIVARLEFY (192 aa)) are large ATPase domain (RuvB-L). Over residues 9 to 22 (ASSSPAARRVVSTA) the composition is skewed to low complexity. ATP contacts are provided by residues Leu35, Arg36, Gly77, Lys80, Thr81, Thr82, 143–145 (EDY), Arg186, Tyr196, and Arg233. A Mg(2+)-binding site is contributed by Thr81. The small ATPAse domain (RuvB-S) stretch occupies residues 197 to 267 (SVEELARIVT…IADKALAMLD (71 aa)). Positions 270 to 355 (PQGFDVMDRK…TTSGSELFDA (86 aa)) are head domain (RuvB-H). 2 residues coordinate DNA: Arg325 and Arg330.

This sequence belongs to the RuvB family. In terms of assembly, homohexamer. Forms an RuvA(8)-RuvB(12)-Holliday junction (HJ) complex. HJ DNA is sandwiched between 2 RuvA tetramers; dsDNA enters through RuvA and exits via RuvB. An RuvB hexamer assembles on each DNA strand where it exits the tetramer. Each RuvB hexamer is contacted by two RuvA subunits (via domain III) on 2 adjacent RuvB subunits; this complex drives branch migration. In the full resolvosome a probable DNA-RuvA(4)-RuvB(12)-RuvC(2) complex forms which resolves the HJ.

The protein localises to the cytoplasm. The enzyme catalyses ATP + H2O = ADP + phosphate + H(+). Its function is as follows. The RuvA-RuvB-RuvC complex processes Holliday junction (HJ) DNA during genetic recombination and DNA repair, while the RuvA-RuvB complex plays an important role in the rescue of blocked DNA replication forks via replication fork reversal (RFR). RuvA specifically binds to HJ cruciform DNA, conferring on it an open structure. The RuvB hexamer acts as an ATP-dependent pump, pulling dsDNA into and through the RuvAB complex. RuvB forms 2 homohexamers on either side of HJ DNA bound by 1 or 2 RuvA tetramers; 4 subunits per hexamer contact DNA at a time. Coordinated motions by a converter formed by DNA-disengaged RuvB subunits stimulates ATP hydrolysis and nucleotide exchange. Immobilization of the converter enables RuvB to convert the ATP-contained energy into a lever motion, pulling 2 nucleotides of DNA out of the RuvA tetramer per ATP hydrolyzed, thus driving DNA branch migration. The RuvB motors rotate together with the DNA substrate, which together with the progressing nucleotide cycle form the mechanistic basis for DNA recombination by continuous HJ branch migration. Branch migration allows RuvC to scan DNA until it finds its consensus sequence, where it cleaves and resolves cruciform DNA. In Methylibium petroleiphilum (strain ATCC BAA-1232 / LMG 22953 / PM1), this protein is Holliday junction branch migration complex subunit RuvB.